Consider the following 716-residue polypeptide: uncharacterized protein (716 aa).

Disordered stretches follow at residues 84-103 (SPSI…ERYP) and 153-189 (VTDE…SQGQ). Serine 97 carries the phosphoserine modification. Residues lysine 201, lysine 204, lysine 237, lysine 283, and lysine 626 each participate in a glycyl lysine isopeptide (Lys-Gly) (interchain with G-Cter in SUMO2) cross-link.

This is an uncharacterized protein from Mus musculus (Mouse).